The following is a 465-amino-acid chain: Methylenetetrahydrofolate--tRNA-(uracil-5-)-methyltransferase TrmFO (465 aa).

3 to 8 (GAGLAG) contacts FAD.

The protein belongs to the MnmG family. TrmFO subfamily. It depends on FAD as a cofactor.

Its subcellular location is the cytoplasm. The catalysed reaction is uridine(54) in tRNA + (6R)-5,10-methylene-5,6,7,8-tetrahydrofolate + NADH + H(+) = 5-methyluridine(54) in tRNA + (6S)-5,6,7,8-tetrahydrofolate + NAD(+). It catalyses the reaction uridine(54) in tRNA + (6R)-5,10-methylene-5,6,7,8-tetrahydrofolate + NADPH + H(+) = 5-methyluridine(54) in tRNA + (6S)-5,6,7,8-tetrahydrofolate + NADP(+). Its function is as follows. Catalyzes the folate-dependent formation of 5-methyl-uridine at position 54 (M-5-U54) in all tRNAs. This Bradyrhizobium sp. (strain ORS 278) protein is Methylenetetrahydrofolate--tRNA-(uracil-5-)-methyltransferase TrmFO.